The chain runs to 134 residues: Cytochrome b (134 aa).

3 helical membrane-spanning segments follow: residues Phe33–Met53, Trp77–Val98, and Trp113–Leu133. His83 and His97 together coordinate heme b.

This sequence belongs to the cytochrome b family. The cytochrome bc1 complex contains 11 subunits: 3 respiratory subunits (MT-CYB, CYC1 and UQCRFS1), 2 core proteins (UQCRC1 and UQCRC2) and 6 low-molecular weight proteins (UQCRH/QCR6, UQCRB/QCR7, UQCRQ/QCR8, UQCR10/QCR9, UQCR11/QCR10 and a cleavage product of UQCRFS1). This cytochrome bc1 complex then forms a dimer. Heme b serves as cofactor.

The protein resides in the mitochondrion inner membrane. Functionally, component of the ubiquinol-cytochrome c reductase complex (complex III or cytochrome b-c1 complex) that is part of the mitochondrial respiratory chain. The b-c1 complex mediates electron transfer from ubiquinol to cytochrome c. Contributes to the generation of a proton gradient across the mitochondrial membrane that is then used for ATP synthesis. This Sorex shinto sadonis (Sado shrew) protein is Cytochrome b (MT-CYB).